Consider the following 426-residue polypeptide: Mannose-6-phosphate isomerase (426 aa).

Positions 112, 114, 139, and 277 each coordinate Zn(2+). Residue Arg-296 is part of the active site.

This sequence belongs to the mannose-6-phosphate isomerase type 1 family. Zn(2+) is required as a cofactor.

The protein resides in the cytoplasm. The enzyme catalyses D-mannose 6-phosphate = D-fructose 6-phosphate. The protein operates within nucleotide-sugar biosynthesis; GDP-alpha-D-mannose biosynthesis; alpha-D-mannose 1-phosphate from D-fructose 6-phosphate: step 1/2. Its function is as follows. Involved in the synthesis of the GDP-mannose and dolichol-phosphate-mannose required for a number of critical mannosyl transfer reactions. The chain is Mannose-6-phosphate isomerase (PMI40) from Ogataea parapolymorpha (strain ATCC 26012 / BCRC 20466 / JCM 22074 / NRRL Y-7560 / DL-1) (Yeast).